A 137-amino-acid chain; its full sequence is uncharacterized protein (137 aa).

This is an uncharacterized protein from Escherichia coli (strain K12).